We begin with the raw amino-acid sequence, 122 residues long: Large ribosomal subunit protein bL17 (122 aa).

It belongs to the bacterial ribosomal protein bL17 family. In terms of assembly, part of the 50S ribosomal subunit. Contacts protein L32.

This chain is Large ribosomal subunit protein bL17, found in Staphylococcus carnosus (strain TM300).